A 191-amino-acid chain; its full sequence is Probable GTP-binding protein EngB (191 aa).

In terms of domain architecture, EngB-type G spans 13-189; the sequence is DRLEVAFAGR…RAEIVALLPD (177 aa). GTP is bound by residues 21–28, 48–52, 67–70, 134–137, and 168–170; these read GRSNVGKS, GRTRE, DLPG, TKTD, and TSS. Mg(2+)-binding residues include serine 28 and threonine 50.

This sequence belongs to the TRAFAC class TrmE-Era-EngA-EngB-Septin-like GTPase superfamily. EngB GTPase family. It depends on Mg(2+) as a cofactor.

Functionally, necessary for normal cell division and for the maintenance of normal septation. This is Probable GTP-binding protein EngB from Maricaulis maris (strain MCS10) (Caulobacter maris).